We begin with the raw amino-acid sequence, 402 residues long: Argininosuccinate synthase (402 aa).

7–15 (LYSGGLDTS) is a binding site for ATP. An L-citrulline-binding site is contributed by Tyr83. ATP is bound at residue Gly113. 3 residues coordinate L-aspartate: Thr115, Asn119, and Asp120. L-citrulline is bound at residue Asn119. Residues Arg123, Ser169, Ser178, Glu253, and Tyr265 each coordinate L-citrulline.

The protein belongs to the argininosuccinate synthase family. Type 1 subfamily. Homotetramer.

The protein localises to the cytoplasm. It carries out the reaction L-citrulline + L-aspartate + ATP = 2-(N(omega)-L-arginino)succinate + AMP + diphosphate + H(+). The protein operates within amino-acid biosynthesis; L-arginine biosynthesis; L-arginine from L-ornithine and carbamoyl phosphate: step 2/3. The chain is Argininosuccinate synthase from Thermoplasma acidophilum (strain ATCC 25905 / DSM 1728 / JCM 9062 / NBRC 15155 / AMRC-C165).